A 422-amino-acid chain; its full sequence is Serine hydroxymethyltransferase (422 aa).

(6S)-5,6,7,8-tetrahydrofolate is bound by residues Leu120 and 124–126 (GHL). At Lys228 the chain carries N6-(pyridoxal phosphate)lysine.

The protein belongs to the SHMT family. As to quaternary structure, homodimer. Pyridoxal 5'-phosphate serves as cofactor.

The protein localises to the cytoplasm. The catalysed reaction is (6R)-5,10-methylene-5,6,7,8-tetrahydrofolate + glycine + H2O = (6S)-5,6,7,8-tetrahydrofolate + L-serine. The protein operates within one-carbon metabolism; tetrahydrofolate interconversion. It functions in the pathway amino-acid biosynthesis; glycine biosynthesis; glycine from L-serine: step 1/1. Catalyzes the reversible interconversion of serine and glycine with tetrahydrofolate (THF) serving as the one-carbon carrier. This reaction serves as the major source of one-carbon groups required for the biosynthesis of purines, thymidylate, methionine, and other important biomolecules. Also exhibits THF-independent aldolase activity toward beta-hydroxyamino acids, producing glycine and aldehydes, via a retro-aldol mechanism. This Actinobacillus succinogenes (strain ATCC 55618 / DSM 22257 / CCUG 43843 / 130Z) protein is Serine hydroxymethyltransferase.